Here is a 577-residue protein sequence, read N- to C-terminus: Protein O-linked-mannose beta-1,4-N-acetylglucosaminyltransferase 2 (577 aa).

Over methionine 1–alanine 4 the chain is Cytoplasmic. Residues alanine 5–leucine 25 traverse the membrane as a helical; Signal-anchor for type II membrane protein segment. Topologically, residues arginine 26–threonine 577 are lumenal. Asparagine 98, asparagine 275, asparagine 335, and asparagine 540 each carry an N-linked (GlcNAc...) asparagine glycan. Residues lysine 481 to threonine 577 form the Fibronectin type-III domain.

Belongs to the glycosyltransferase 61 family.

It localises to the endoplasmic reticulum membrane. The catalysed reaction is 3-O-(alpha-D-mannosyl)-L-threonyl-[protein] + UDP-N-acetyl-alpha-D-glucosamine = 3-O-(N-acetyl-beta-D-glucosaminyl-(1-&gt;4)-alpha-D-mannosyl)-L-threonyl-[protein] + UDP + H(+). It participates in protein modification; protein glycosylation. O-linked mannose beta-1,4-N-acetylglucosaminyltransferase that transfers UDP-N-acetyl-D-glucosamine to the 4-position of the mannose to generate N-acetyl-D-glucosamine-beta-1,4-O-D-mannosylprotein. Involved in the biosynthesis of the phosphorylated O-mannosyl trisaccharide (N-acetylgalactosamine-beta-3-N-acetylglucosamine-beta-4-(phosphate-6-)mannose), a carbohydrate structure present in alpha-dystroglycan (DAG1), which is required for binding laminin G-like domain-containing extracellular proteins with high affinity. The sequence is that of Protein O-linked-mannose beta-1,4-N-acetylglucosaminyltransferase 2 (POMGNT2) from Gallus gallus (Chicken).